A 418-amino-acid chain; its full sequence is Alditol oxidase (418 aa).

The 167-residue stretch at 13-179 (ITYTAKELLR…TSLTLDLEPA (167 aa)) folds into the FAD-binding PCMH-type domain. Residues 41–47 (VLGSGHS), S106, S111, G114, 118–121 (TGTH), and V169 contribute to the FAD site. Pros-8alpha-FAD histidine is present on H46. S106 serves as a coordination point for D-sorbitol. S106 is a xylitol binding site. 3 residues coordinate D-sorbitol: E320, R322, and T345. Residues E320, R322, and T345 each contribute to the xylitol site. R322 provides a ligand contact to FAD. H372 provides a ligand contact to FAD. Position 375 (K375) interacts with D-sorbitol. K375 is a xylitol binding site.

Belongs to the oxygen-dependent FAD-linked oxidoreductase family. In terms of assembly, monomer. FAD is required as a cofactor.

The enzyme catalyses an alditol + O2 = an aldose + H2O2. It catalyses the reaction xylitol + O2 = D-xylose + H2O2. The catalysed reaction is D-sorbitol + O2 = D-glucose + H2O2. In terms of biological role, oxidase that performs selective oxidation of the terminal primary hydroxyl group of several alditols, with a reduction of O2 to H2O2. Shows highest activity on xylitol and D-sorbitol, and a poor efficiency with D-mannitol and L-threitol. The sequence is that of Alditol oxidase (xyoA) from Streptomyces coelicolor (strain ATCC BAA-471 / A3(2) / M145).